A 509-amino-acid polypeptide reads, in one-letter code: Ceramide glucosyltransferase (509 aa).

The Lumenal portion of the chain corresponds to 1–42 (MIMQLGLTSLAFLALKCDAYNIAPKIDTPNVEPFAPSGGLKL). A helical membrane pass occupies residues 43–63 (LAIVAIIWYVVVLLVAYYGFF). The Cytoplasmic segment spans residues 64–384 (EIMQKFSKRK…EATLLEPTTE (321 aa)). Asp-123 is a short sequence motif (D1). Residue Asp-179 is a short sequence motif, D2. Residue Asp-321 is a short sequence motif, D3. The active-site Proton acceptor is the Asp-321. Residues 361 to 365 (RRIRW) carry the (Q/R)XXRW motif. Residues 385–405 (CLLCGTFGTFAISTLFLQSYF) form a helical membrane-spanning segment. At 406-408 (NWK) the chain is on the lumenal side. A helical transmembrane segment spans residues 409–429 (FFIFHLLVWMVTDYTQFHILL). The Cytoplasmic segment spans residues 430 to 466 (TNASQDTATCNVPYFAEPNFNAYGSPFESSNLRTFHR). Residues 467–487 (WVLYWLLREVLALPIWISAML) traverse the membrane as a helical segment. Residues 488–509 (GTRIIWRNRPFRINVDLSAEEL) lie on the Lumenal side of the membrane.

This sequence belongs to the glycosyltransferase 2 family.

The protein localises to the golgi apparatus membrane. It catalyses the reaction an N-acylsphing-4-enine + UDP-alpha-D-glucose = a beta-D-glucosyl-(1&lt;-&gt;1')-N-acylsphing-4-enine + UDP + H(+). The protein operates within lipid metabolism; sphingolipid metabolism. In terms of biological role, catalyzes the final step in the biosynthesis of the membrane lipid glucosylceramide (GluCer), the transfer of glucose to ceramide. Glucosylceramides play important roles in growth, differentiation and pathogenicity. The polypeptide is Ceramide glucosyltransferase (Komagataella phaffii (strain GS115 / ATCC 20864) (Yeast)).